A 3739-amino-acid chain; its full sequence is Cardiomyopathy-associated protein 5 (3739 aa).

Disordered stretches follow at residues 1-205, 268-814, 835-884, 967-1270, 1288-1313, 1325-1637, 1650-1969, 1986-2016, 2065-2246, 2273-2318, 2377-2498, 2513-2532, and 2579-2616; these read MESG…PPIT, SLEP…SAFV, VSVS…AIQS, LSED…SDVP, TQASLEPEAEDLVPPPTSGWEKRDAK, SSAL…NLVS, EMNR…EKGK, SSIPDSKVSDNEDLETRPGPSVEKAVPAIEP, FLSN…WETR, AVGE…LALD, VYPE…SAVE, KKQETWSDRPTVHTFQTSKD, and SADGVPPMGGTAQEPEGTSVKDEEFSVTSKPAGLSEDQ. Residues 18 to 47 show a composition bias toward acidic residues; the sequence is ADEEVAQELETEEESEGEGEETAAESEEEP. Residues 48–62 show a composition bias toward basic and acidic residues; sequence DARLSDEDEEGKTKQ. The span at 84–106 shows a compositional bias: polar residues; the sequence is TWETNSSRSSTPWASGESQTSGI. Positions 130–153 are enriched in basic residues; the sequence is RTRKRTQKSKRGSPSLRRKGSKKR. At S155 the chain carries Phosphoserine. 2 stretches are compositionally biased toward polar residues: residues 156 to 175 and 325 to 336; these read LESQDVLTNQEDGPSISESP and ADSNLNVPSSTE. The stretch at 380 to 406 forms a coiled coil; that stretch reads ATMVLERAKEELEQNAQGKESSEDDAS. 3 stretches are compositionally biased toward basic and acidic residues: residues 479-637, 644-663, and 670-730; these read IVHR…REEE, SIVHREEEHAPEPIVHREEE, and SIVH…ERGV. A run of 2 repeats spans residues 482–493 and 494–505. The tract at residues 482 to 720 is 20 X 12 AA approximate tandem repeats of R-[DE]-[EK]-[EG]-H-[AV]-P-E-[PS]-[IM]-V-[HLR]; sequence REEEHAPEPI…EEHAPEPMVH (239 aa). The stretch at 506-519 is one 3; approximate repeat; that stretch reads REEEHAPEPESIVH. Repeat unit 4 spans residues 520-531; that stretch reads REEEHAPESIVH. The stretch at 532-545 is one 5; approximate repeat; it reads REEEHAPEPVPIVH. The 6; approximate repeat unit spans residues 546-559; it reads REEEHAPEPESIVH. A run of 4 repeats spans residues 560-571, 572-583, 584-595, and 596-607. The stretch at 608 to 621 is one 11; approximate repeat; sequence REEEHVPEPESIVR. One copy of the 12; approximate repeat lies at 622–633; the sequence is KGEEHAPEPIVH. The stretch at 634-647 is one 14; approximate repeat; that stretch reads REEEQVPEPESIVH. Residues 648–659 form repeat 15; sequence REEEHAPEPIVH. One copy of the 16; approximate repeat lies at 660–673; that stretch reads REEEQVPEPESIVH. 4 repeat units span residues 674–685, 686–696, 697–708, and 709–720. The segment covering 740 to 756 has biased composition (acidic residues); sequence TEPEDSSLEEEIIELDY. S850 is modified (phosphoserine). Polar residues-rich tracts occupy residues 861 to 884 and 1151 to 1161; these read PAMTSVSEQSLSPSTTEKTSAIQS and CLTSPSEQTVL. Basic and acidic residues-rich tracts occupy residues 1188 to 1197 and 1230 to 1242; these read AETEQNKVEP and EHSEPSQEREESS. The span at 1337-1351 shows a compositional bias: polar residues; that stretch reads TSVLPTSQPSVSPES. Basic and acidic residues-rich tracts occupy residues 1441-1460 and 1476-1486; these read LEQRMLSKNEPEVAKPHSPP and TEVKQESKITR. The span at 1522–1540 shows a compositional bias: polar residues; the sequence is ASSSATTVPVTKLDSNSTK. Composition is skewed to basic and acidic residues over residues 1620–1631, 1697–1706, 1726–1742, 1760–1770, 1786–1803, and 1836–1850; these read NDKHEEITRSPD, IDSRDRDRSL, GPAELQRRGKEQEENRK, IEQKEPKRTLH, DKPELGVKQLAEKKENLE, and EKPDGLVNQHEDRKP. Over residues 1854–1863 the composition is skewed to polar residues; it reads QLESSESTDL. Composition is skewed to basic and acidic residues over residues 1874 to 1885, 1896 to 1916, 1992 to 2001, and 2153 to 2165; these read DTDHTSETRNQE, LSQEPRRVQSKAVDDSEEGRK, KVSDNEDLET, and ARKEEPSSDHKET. Positions 2181 to 2190 are enriched in polar residues; the sequence is KSAQSAFTRM. S2192 bears the Phosphoserine mark. Composition is skewed to basic and acidic residues over residues 2212-2244, 2279-2299, 2306-2318, 2377-2419, and 2429-2448; these read GEDRLRQEMPKPTSLEHCEEEVERPTEEKDGWE, RMPESRPFKLEESKAAERLEQ, KLMEKPSKTLALD, VYPE…ETDG, and ELEKSGESRVDLKEERRRFV. Position 2411 is a phosphoserine (S2411). The residue at position 2495 (S2495) is a Phosphoserine. Positions 2513–2523 are enriched in basic and acidic residues; sequence KKQETWSDRPT. A coiled-coil region spans residues 2640–2664; that stretch reads SVDQEESEQMQDKLQYLEEKASFKS. Disordered regions lie at residues 2667-2725, 2742-2773, 2791-2835, 2881-2959, 3027-3047, and 3111-3174; these read VHDE…QPTV, LSPGSGKQKSTVEESSEEATKTLTSFPESSAE, GPEK…GMPL, EKNE…EREI, LESEPSSQGNEAGNASPDVNL, and PEEP…QKEP. The span at 2682-2709 shows a compositional bias: basic and acidic residues; sequence SKLEVPDRKITSLKENKTKETHKTKEEI. The interval 2731-3041 is required for RYR2 clustering; the sequence is YFEKYTLIDY…SSQGNEAGNA (311 aa). The segment covering 2762 to 2773 has biased composition (polar residues); sequence KTLTSFPESSAE. Composition is skewed to basic and acidic residues over residues 2791–2804 and 2812–2828; these read GPEKDDSKLSHAEM and KPDDRNAPKGISRDVDS. Residue S2905 is modified to Phosphoserine. Positions 2918–2929 are enriched in basic and acidic residues; it reads YILKDDILHDES. A compositionally biased stretch (polar residues) spans 3030 to 3047; the sequence is EPSSQGNEAGNASPDVNL. The span at 3153–3162 shows a compositional bias: basic and acidic residues; sequence VWDRTEDQSA. Positions 3187-3214 are amphipathic helix H1; that stretch reads KSLVSEMDKALDIHKDHEVSALDTAISA. Positions 3215 to 3342 are B-box coiled-coil; BBC; the sequence is VKVQLGEFLE…ERLLSAMEST (128 aa). A coiled-coil region spans residues 3244–3323; it reads FNTIEEKCSK…REAEELDETV (80 aa). An amphipathic helix H2 region spans residues 3301-3318; it reads SMDTAKDTLETIVREAEE. Fibronectin type-III domains follow at residues 3374-3475 and 3476-3568; these read VPQP…TAPS and TPVI…TRGT. The segment at 3421 to 3437 is amphipathic helix H3; sequence EINELVEEYRLTVKESC. Residues 3550–3735 enclose the B30.2/SPRY domain; sequence NASGTSEQSE…LHLGLEPPDS (186 aa).

Interacts with PRKAR2A. Interacts with ACTN2, DES and DTNBP1/dysbindin. Interacts with DMD/dystrophin. Interacts with the calcineurin catalytic subunit PPP3CA. Interacts with TTN. Interacts with CAPN3; this interaction, which results in CMYA5 proteolysis, may protect CAPN3 from autolysis. Interacts with FSD2. In cardiac muscles, identified in a complex composed of FSD2, CMYA5 and RYR2. Phosphorylated by PKA. Expressed in skin as well as in cardiac muscle. Expressed in skeletal muscle (at protein level).

The protein resides in the nucleus. It is found in the cytoplasm. The protein localises to the perinuclear region. It localises to the myofibril. Its subcellular location is the sarcomere. The protein resides in the m line. It is found in the sarcoplasmic reticulum. Its function is as follows. May serve as an anchoring protein that mediates the subcellular compartmentation of protein kinase A (PKA) via binding to PRKAR2A. May attenuate calcineurin ability to induce slow-fiber gene program in muscle and may negatively modulate skeletal muscle regeneration. Plays a role in the assembly of ryanodine receptor (RYR2) clusters in striated muscle. In Mus musculus (Mouse), this protein is Cardiomyopathy-associated protein 5 (Cmya5).